A 356-amino-acid chain; its full sequence is 3-dehydroquinate synthase (356 aa).

NAD(+) is bound by residues Asp-69–Lys-74, Gly-103–Asp-107, Thr-127–Thr-128, Lys-140, and Lys-149. Glu-182, His-245, and His-262 together coordinate Zn(2+).

This sequence belongs to the sugar phosphate cyclases superfamily. Dehydroquinate synthase family. It depends on Co(2+) as a cofactor. Zn(2+) is required as a cofactor. NAD(+) serves as cofactor.

The protein localises to the cytoplasm. The enzyme catalyses 7-phospho-2-dehydro-3-deoxy-D-arabino-heptonate = 3-dehydroquinate + phosphate. It functions in the pathway metabolic intermediate biosynthesis; chorismate biosynthesis; chorismate from D-erythrose 4-phosphate and phosphoenolpyruvate: step 2/7. In terms of biological role, catalyzes the conversion of 3-deoxy-D-arabino-heptulosonate 7-phosphate (DAHP) to dehydroquinate (DHQ). This is 3-dehydroquinate synthase from Pseudoalteromonas translucida (strain TAC 125).